The sequence spans 465 residues: Purple acid phosphatase 2 (465 aa).

The N-terminal stretch at 1–32 (MGASRTGCYLLAVVLAAVMNAAIAGITSSFIR) is a signal peptide. N-linked (GlcNAc...) asparagine glycosylation is found at Asn-110 and Asn-138. Fe cation is bound at residue Asp-164. A glycan (N-linked (GlcNAc...) asparagine) is linked at Asn-172. Fe cation is bound by residues Asp-193 and Tyr-196. Asp-193 lines the Mn(2+) pocket. Asn-230 contributes to the Mn(2+) binding site. Residue Asn-230 coordinates substrate. A glycan (N-linked (GlcNAc...) asparagine) is linked at Asn-303. His-315 lines the Mn(2+) pocket. The Proton donor role is filled by His-325. His-352 contributes to the Mn(2+) binding site. 352–354 (HVH) contacts substrate. His-354 contributes to the Fe cation binding site. Asn-400 and Asn-425 each carry an N-linked (GlcNAc...) asparagine glycan.

This sequence belongs to the metallophosphoesterase superfamily. Purple acid phosphatase family. In terms of assembly, homodimer; disulfide-linked. Fe cation is required as a cofactor. The cofactor is Mn(2+). Zn(2+) serves as cofactor. It depends on Cu(2+) as a cofactor. Requires Mg(2+) as cofactor.

The protein resides in the secreted. The enzyme catalyses a phosphate monoester + H2O = an alcohol + phosphate. The chain is Purple acid phosphatase 2 (PAP2) from Ipomoea batatas (Sweet potato).